We begin with the raw amino-acid sequence, 249 residues long: RNA polymerase sigma factor SigI3 (249 aa).

Positions 60-73 (EEFSIGLAAFNEAI) match the Polymerase core binding motif. The segment at residues 199–218 (MKEVLSRIKVNHKTIQRNRK) is a DNA-binding region (H-T-H motif).

Belongs to the sigma-70 factor family. SigI subfamily. As to quaternary structure, interacts with RsgI3.

It localises to the cytoplasm. Negatively regulated by the anti-sigma-I factor RsgI3. Binding of the polysaccharide substrate to RsgI3 may lead to the release and activation of SigI3. In terms of biological role, sigma factors are initiation factors that promote the attachment of RNA polymerase to specific initiation sites and are then released. This sigma factor is involved in regulation of cellulosomal genes via an external polysaccharide-sensing mechanism. Recognizes the predicted promoters associated with sigI3 itself, pl11, ce12 and cipA. In Acetivibrio thermocellus (strain ATCC 27405 / DSM 1237 / JCM 9322 / NBRC 103400 / NCIMB 10682 / NRRL B-4536 / VPI 7372) (Clostridium thermocellum), this protein is RNA polymerase sigma factor SigI3.